The following is a 548-amino-acid chain: 5-epi-aristolochene synthase 3 (548 aa).

5 residues coordinate Mg(2+): Asp-301, Asp-305, Asp-444, Thr-448, and Glu-452. The short motif at 301–305 (DDTFD) is the DDXXD motif element.

It belongs to the terpene synthase family. Monomer. It depends on Mg(2+) as a cofactor. In terms of tissue distribution, expressed in roots, but not in shoots.

It is found in the cytoplasm. It catalyses the reaction (2E,6E)-farnesyl diphosphate = (+)-5-epi-aristolochene + diphosphate. Its pathway is secondary metabolite biosynthesis; terpenoid biosynthesis. In terms of biological role, catalyzes the cyclization of trans,trans-farnesyl diphosphate (FPP) to the bicyclic intermediate 5-epi-aristolochene, initial step in the conversion of FPP to the sesquiterpenoid antifungal phytoalexin capsidiol. Produces germacrene A as an enzyme-bound intermediate that is not released by the enzyme, but is further cyclized to produce the bicyclic 5-epi-aristolochene. This chain is 5-epi-aristolochene synthase 3, found in Nicotiana attenuata (Coyote tobacco).